The sequence spans 216 residues: Ras-related protein RABE1d (216 aa).

22-29 (GDSGVGKS) contacts GTP. An Effector region motif is present at residues 44-52 (FITTIGIDF). GTP-binding positions include 70-74 (DTAGQ), 128-131 (NKAD), and 159-160 (SA). The interval 196–216 (TKQDTAASSSTAEKSACCSYV) is disordered. Residues 200-216 (TAASSSTAEKSACCSYV) show a composition bias toward low complexity. S-geranylgeranyl cysteine attachment occurs at residues Cys-212 and Cys-213.

Belongs to the small GTPase superfamily. Rab family. In terms of assembly, interacts with PI5K2.

It localises to the golgi apparatus membrane. The protein localises to the cell membrane. Involved in membrane trafficking from the Golgi to the plasma membrane. In Arabidopsis thaliana (Mouse-ear cress), this protein is Ras-related protein RABE1d (RABE1D).